The chain runs to 437 residues: Xylose isomerase (437 aa).

Residues histidine 102 and aspartate 105 contribute to the active site. Mg(2+) is bound by residues glutamate 233, glutamate 269, histidine 272, aspartate 297, aspartate 308, aspartate 310, and aspartate 340.

Belongs to the xylose isomerase family. As to quaternary structure, homotetramer. Requires Mg(2+) as cofactor.

The protein localises to the cytoplasm. It catalyses the reaction alpha-D-xylose = alpha-D-xylulofuranose. The chain is Xylose isomerase from Novosphingobium aromaticivorans (strain ATCC 700278 / DSM 12444 / CCUG 56034 / CIP 105152 / NBRC 16084 / F199).